The chain runs to 430 residues: 3-deoxy-D-manno-octulosonic acid transferase (430 aa).

Residues 12 to 32 (AFLVAAFLAAAPRIFYKVVFH) traverse the membrane as a helical; Signal-anchor segment. Catalysis depends on E66, which acts as the Proton acceptor. CMP contacts are provided by residues 274 to 275 (PR), 314 to 316 (MGI), and 341 to 344 (NLLE).

This sequence belongs to the glycosyltransferase group 1 family. Glycosyltransferase 30 subfamily.

The protein localises to the cell inner membrane. The enzyme catalyses lipid IVA (E. coli) + CMP-3-deoxy-beta-D-manno-octulosonate = alpha-Kdo-(2-&gt;6)-lipid IVA (E. coli) + CMP + H(+). The catalysed reaction is alpha-Kdo-(2-&gt;6)-lipid IVA (E. coli) + CMP-3-deoxy-beta-D-manno-octulosonate = alpha-Kdo-(2-&gt;4)-alpha-Kdo-(2-&gt;6)-lipid IVA (E. coli) + CMP + H(+). It carries out the reaction alpha-Kdo-(2-&gt;4)-alpha-Kdo-(2-&gt;6)-lipid IVA (E. coli) + CMP-3-deoxy-beta-D-manno-octulosonate = alpha-Kdo-(2-&gt;8)-alpha-Kdo-(2-&gt;4)-alpha-Kdo-(2-&gt;6)-lipid IVA (E. coli) + CMP + H(+). The protein operates within bacterial outer membrane biogenesis; LPS core biosynthesis. Involved in lipopolysaccharide (LPS) biosynthesis. Catalyzes the transfer of three 3-deoxy-D-manno-octulosonate (Kdo) residues from CMP-Kdo to lipid IV(A), the tetraacyldisaccharide-1,4'-bisphosphate precursor of lipid A. Thus generates the genus-specific LPS epitope of Chlamydia, composed of the trisaccharide alpha-Kdo-(2-&gt;8)-alpha-Kdo-(2-&gt;4)-alpha-Kdo. The protein is 3-deoxy-D-manno-octulosonic acid transferase (waaA) of Chlamydia muridarum (strain MoPn / Nigg).